A 47-amino-acid chain; its full sequence is Delta-stichotoxin-Hcr3a (47 aa).

Pro-3 carries the post-translational modification Hydroxyproline. 3 disulfides stabilise this stretch: Cys-4/Cys-44, Cys-6/Cys-34, and Cys-27/Cys-45.

This sequence belongs to the sea anemone sodium channel inhibitory toxin family. Type I subfamily.

Its subcellular location is the secreted. The protein localises to the nematocyst. Inhibits voltage-gated sodium channels (Nav). The sequence is that of Delta-stichotoxin-Hcr3a from Radianthus crispa (Leathery sea anemone).